Reading from the N-terminus, the 190-residue chain is Adenine phosphoribosyltransferase (190 aa).

This sequence belongs to the purine/pyrimidine phosphoribosyltransferase family. Homodimer.

The protein localises to the cytoplasm. The enzyme catalyses AMP + diphosphate = 5-phospho-alpha-D-ribose 1-diphosphate + adenine. Its pathway is purine metabolism; AMP biosynthesis via salvage pathway; AMP from adenine: step 1/1. Its function is as follows. Catalyzes a salvage reaction resulting in the formation of AMP, that is energically less costly than de novo synthesis. The polypeptide is Adenine phosphoribosyltransferase (Cupriavidus pinatubonensis (strain JMP 134 / LMG 1197) (Cupriavidus necator (strain JMP 134))).